The sequence spans 155 residues: Large ribosomal subunit protein uL15 (155 aa).

Over residues Met-1–Thr-13 the composition is skewed to basic and acidic residues. A disordered region spans residues Met-1 to Asn-47. Positions Arg-21 to Val-35 are enriched in gly residues.

It belongs to the universal ribosomal protein uL15 family. Part of the 50S ribosomal subunit.

Functionally, binds to the 23S rRNA. The polypeptide is Large ribosomal subunit protein uL15 (Bartonella tribocorum (strain CIP 105476 / IBS 506)).